Consider the following 819-residue polypeptide: Lon protease (819 aa).

The disordered stretch occupies residues 1–36 (MDSTTNSDSPILDPNPEDVEKLLDESEEESEDQSTE). Positions 43 to 240 (LFILPLNKRP…KALILLKKEL (198 aa)) constitute a Lon N-terminal domain. ATP is bound at residue 393 to 400 (GPPGVGKT). The Lon proteolytic domain maps to 635 to 817 (STPVGVATGL…DDVLKVAFPK (183 aa)). Active-site residues include Ser723 and Lys766.

Belongs to the peptidase S16 family. In terms of assembly, homohexamer. Organized in a ring with a central cavity.

Its subcellular location is the cytoplasm. The catalysed reaction is Hydrolysis of proteins in presence of ATP.. Its function is as follows. ATP-dependent serine protease that mediates the selective degradation of mutant and abnormal proteins as well as certain short-lived regulatory proteins. Required for cellular homeostasis and for survival from DNA damage and developmental changes induced by stress. Degrades polypeptides processively to yield small peptide fragments that are 5 to 10 amino acids long. Binds to DNA in a double-stranded, site-specific manner. This is Lon protease from Chlamydia pneumoniae (Chlamydophila pneumoniae).